Reading from the N-terminus, the 683-residue chain is MIDQYKHKQLQIGLVSPQQIKAWAKKILPNGEVVGEVTRPSTFHYKTDKPEKDGLFCERIFGPIKSGICACGNSRASVAENEDERFCQKCGVEFVDSRIRRYQMGYIKLACPVTHVWYLKGLPSYIANLLDKPLKKLEGLVYGDFSFARPSAKKPTFLRLRGLFEDEISSCNHSISPFFSTPGFATFRNREIATGAGAIREQLADLDLRIIIENSLVEWKELEDEGYSGDEWEDRKRRIRKVFLIRRMQLAKHFIQTNVEPEWMVLCLLPVLPPELRPIVYRSGDKVVTSDINELYKRVIRRNNNLAYLLKRSELAPADLVMCQEKLVQEAVDTLLDSGSRGQPMRDGHNKVYKSLSDVIEGKEGRFRETLLGKRVDYSGRSVIVVGPSLSLHQCGLPLEIAIKLFQLFVIRDLITKRATSNVRIAKRKIWEKEPIVWEILQEVMRGHPVLLNRAPTLHRLGIQAFQPTLVEGRTICLHPLVCKGFNADFDGDQMAVHLPLSLEAQAEARLLMFSHMNLLSPAIGDPICVPTQDMLIGLYVLTIGNRRGICANRYNSCGNSPNKKINYNNNNYYKYTKDKEPHFSSSYDALGAYRQKRIGLNSPLWLRWKLDQRIVGSREVPIEVQYESFGTYHEIYAHYLVVGNRKKEIRSIYIRTTLGHISFYREIEEAVQGFSRAYSYTI.

Zn(2+) is bound by residues Cys69, Cys71, Cys87, and Cys90. Positions 489, 491, and 493 each coordinate Mg(2+).

Belongs to the RNA polymerase beta' chain family. RpoC1 subfamily. In terms of assembly, in plastids the minimal PEP RNA polymerase catalytic core is composed of four subunits: alpha, beta, beta', and beta''. When a (nuclear-encoded) sigma factor is associated with the core the holoenzyme is formed, which can initiate transcription. It depends on Mg(2+) as a cofactor. Zn(2+) serves as cofactor.

Its subcellular location is the plastid. It is found in the chloroplast. The catalysed reaction is RNA(n) + a ribonucleoside 5'-triphosphate = RNA(n+1) + diphosphate. Its function is as follows. DNA-dependent RNA polymerase catalyzes the transcription of DNA into RNA using the four ribonucleoside triphosphates as substrates. This chain is DNA-directed RNA polymerase subunit beta', found in Saccharum hybrid (Sugarcane).